Here is a 140-residue protein sequence, read N- to C-terminus: Putative pre-16S rRNA nuclease (140 aa).

It belongs to the YqgF nuclease family.

It localises to the cytoplasm. Functionally, could be a nuclease involved in processing of the 5'-end of pre-16S rRNA. The sequence is that of Putative pre-16S rRNA nuclease from Yersinia pseudotuberculosis serotype IB (strain PB1/+).